Here is a 67-residue protein sequence, read N- to C-terminus: DNA gyrase inhibitor YacG (67 aa).

Zn(2+)-binding residues include Cys-8, Cys-11, Cys-27, and Cys-31.

This sequence belongs to the DNA gyrase inhibitor YacG family. As to quaternary structure, interacts with GyrB. The cofactor is Zn(2+).

Its function is as follows. Inhibits all the catalytic activities of DNA gyrase by preventing its interaction with DNA. Acts by binding directly to the C-terminal domain of GyrB, which probably disrupts DNA binding by the gyrase. The sequence is that of DNA gyrase inhibitor YacG from Ralstonia pickettii (strain 12J).